The following is a 213-amino-acid chain: uncharacterized protein (213 aa).

Residues methionine 1 to glutamine 14 are compositionally biased toward polar residues. Residues methionine 1 to arginine 26 are disordered. Residues glutamine 29–valine 89 enclose the HTH tetR-type domain.

This is an uncharacterized protein from Mycobacterium tuberculosis (strain CDC 1551 / Oshkosh).